An 836-amino-acid polypeptide reads, in one-letter code: Protein O-mannosyl-transferase TMTC2 (836 aa).

The helical transmembrane segment at 1–21 threads the bilayer; the sequence is MIAELVSSALGLALYLNTLSA. The Extracellular segment spans residues 22–84; sequence DFCYDDSRAI…LNHAIGGLNP (63 aa). Residues 85-105 form a helical membrane-spanning segment; sequence WSYHLVNVLLHAAVTGLFTSF. The Cytoplasmic portion of the chain corresponds to 106-107; the sequence is SK. A helical membrane pass occupies residues 108–128; that stretch reads ILLGDGYWTFMAGLMFASHPI. The Extracellular portion of the chain corresponds to 129–132; the sequence is HTEA. Residues 133–153 form a helical membrane-spanning segment; it reads VAGIVGRADVGASLFFLLSLL. The Cytoplasmic segment spans residues 154-162; it reads CYIKHCSTR. 2 helical membrane-spanning segments follow: residues 163–184 and 185–204; these read GYSA…CSML and WKEQ…VFVF. At 205–220 the chain is on the cytoplasmic side; sequence HRLKIKQILPTIYKRK. Residues 221-241 form a helical membrane-spanning segment; it reads NLSLFLSISLLIFWGSSLLGA. At 242–312 the chain is on the extracellular side; it reads RLYWMGNKPP…KTVCDWRNLH (71 aa). A helical membrane pass occupies residues 313-333; that stretch reads TVAFYTGLLLLAYYGLKSPSV. Topologically, residues 334–399 are cytoplasmic; that stretch reads DRECNGKTVT…TENIVVLSLS (66 aa). Residues 400-420 traverse the membrane as a helical segment; it reads LLIIPFVPATNLFFYVGFVIA. Residues 421-422 are Extracellular-facing; that stretch reads ER. The chain crosses the membrane as a helical span at residues 423-443; the sequence is VLYIPSMGFCLLITVGARALY. Topologically, residues 444–449 are cytoplasmic; the sequence is VKVQKR. Residues 450 to 470 form a helical membrane-spanning segment; sequence FLKSLIFYATATLIVFYGLKT. Over 471–836 the chain is Extracellular; sequence AIRNGDWQNE…EKQGLKTSKT (366 aa). 9 TPR repeats span residues 493 to 526, 527 to 560, 561 to 594, 606 to 639, 643 to 676, 677 to 710, 711 to 744, 745 to 778, and 779 to 812; these read AKAW…RSNM, ADML…RPTL, ASAY…PDEN, TSCL…MPRQ, QSLY…KTDH, IPAH…DPTK, GNCY…DSTE, FDVV…RPNY, and PAAL…KPDD.

It belongs to the TMTC family.

It is found in the membrane. The protein localises to the endoplasmic reticulum. It catalyses the reaction a di-trans,poly-cis-dolichyl beta-D-mannosyl phosphate + L-seryl-[protein] = 3-O-(alpha-D-mannosyl)-L-seryl-[protein] + a di-trans,poly-cis-dolichyl phosphate + H(+). The enzyme catalyses a di-trans,poly-cis-dolichyl beta-D-mannosyl phosphate + L-threonyl-[protein] = 3-O-(alpha-D-mannosyl)-L-threonyl-[protein] + a di-trans,poly-cis-dolichyl phosphate + H(+). It functions in the pathway protein modification; protein glycosylation. Transfers mannosyl residues to the hydroxyl group of serine or threonine residues. The 4 members of the TMTC family are O-mannosyl-transferases dedicated primarily to the cadherin superfamily, each member seems to have a distinct role in decorating the cadherin domains with O-linked mannose glycans at specific regions. Also acts as O-mannosyl-transferase on other proteins such as PDIA3. This chain is Protein O-mannosyl-transferase TMTC2, found in Homo sapiens (Human).